A 222-amino-acid chain; its full sequence is Glutathione-specific gamma-glutamylcyclotransferase 1 (222 aa).

The interval 1-25 is disordered; it reads MKQESAAQSTPPPSLSPAPSAQPSW. 35–40 contributes to the substrate binding site; it reads IFGYGS. Catalysis depends on glutamate 115, which acts as the Proton acceptor.

This sequence belongs to the gamma-glutamylcyclotransferase family. ChaC subfamily. Interacts with NOTCH1 (via extracellular region).

It is found in the cytoplasm. Its subcellular location is the cytosol. The protein resides in the golgi apparatus. It localises to the trans-Golgi network. The catalysed reaction is glutathione = L-cysteinylglycine + 5-oxo-L-proline. Catalyzes the cleavage of glutathione into 5-oxo-L-proline and a Cys-Gly dipeptide. Acts specifically on glutathione, but not on other gamma-glutamyl peptides. Glutathione depletion is an important factor for apoptosis initiation and execution. Acts as a pro-apoptotic component of the unfolded protein response pathway by mediating the pro-apoptotic effects of the ATF4-ATF3-DDIT3/CHOP cascade. Negative regulator of Notch signaling pathway involved in embryonic neurogenesis: acts by inhibiting Notch cleavage by furin, maintaining Notch in an immature inactive form, thereby promoting neurogenesis in embryos. The protein is Glutathione-specific gamma-glutamylcyclotransferase 1 of Rattus norvegicus (Rat).